The primary structure comprises 729 residues: MNKGWLELESDPGLFTLLVEDFGVKGVQVEEIYDLQSKCQGPVYGFIFLFKWIEERRSRRKVSTLVDDTSVIDDDIVNNMFFAHQLIPNSCATHALLSVLLNCSSVDLGPTLSRMKDFTKGFSPESKGYAIGNAPELAKAHNSHARPEPRHLPEKQNGLSAVRTMEAFHFVSYVPITGRLFELDGLKVYPIDHGPWGEDEEWTDKARRVIMERIGLATAGEPYHDIRFNLMAVVPDRRIKYEARLHVLKVNRQTVLEALQQLIRVTQPELIQTHKSQESQLPEESKSASNKSPLVLEANRAPAASEGNHTDGAEEAAGSCAQAPSHSPPNKPKLVVKPPGSSLNGVHPNPTPIVQRLPAFLDNHNYAKSPMQEEEDLAAGVGRSRVPVRPPQQYSDDEDDYEDDEEDDVQNTNSALRYKGKGTGKPGALSGSADGQLSVLQPNTINVLAEKLKESQKDLSIPLSIKTSSGAGSPAVAVPTHSQPSPTPSNESTDTASEIGSAFNSPLRSPIRSANPTRPSSPVTSHISKVLFGEDDSLLRVDCIRYNRAVRDLGPVISTGLLHLAEDGVLSPLALTEGGKGSSPSIRPIQGSQGSSSPVEKEVVEATDSREKTGMVRPGEPLSGEKYSPKELLALLKCVEAEIANYEACLKEEVEKRKKFKIDDQRRTHNYDEFICTFISMLAQEGMLANLVEQNISVRRRQGVSIGRLHKQRKPDRRKRSRPYKAKRQ.

In terms of domain architecture, UCH catalytic spans 4 to 235 (GWLELESDPG…IRFNLMAVVP (232 aa)). An Arg-finger motif motif is present at residues 56–60 (RRSRR). Cysteine 91 serves as the catalytic Nucleophile. The active-site Proton donor is the histidine 169. Serine 292 carries the phosphoserine modification. Positions 301–351 (APAASEGNHTDGAEEAAGSCAQAPSHSPPNKPKLVVKPPGSSLNGVHPNPT) are disordered. Positions 363 to 366 (NHNY) match the HBM-like motif motif. 2 positions are modified to phosphoserine: serine 369 and serine 395. 2 disordered regions span residues 372 to 435 (QEEE…SADG) and 464 to 524 (SIKT…SPVT). Residues 395 to 409 (SDDEDDYEDDEEDDV) show a composition bias toward acidic residues. A compositionally biased stretch (polar residues) spans 480-524 (THSQPSPTPSNESTDTASEIGSAFNSPLRSPIRSANPTRPSSPVT). Threonine 493 bears the Phosphothreonine mark. Residues serine 521, serine 537, serine 585, and serine 597 each carry the phosphoserine modification. Residues 575–623 (LTEGGKGSSPSIRPIQGSQGSSSPVEKEVVEATDSREKTGMVRPGEPLS) are disordered. Residues 582–598 (SSPSIRPIQGSQGSSSP) show a composition bias toward polar residues. Residues 596 to 721 (SSPVEKEVVE…QRKPDRRKRS (126 aa)) are interaction with BRCA1. A compositionally biased stretch (basic and acidic residues) spans 599-614 (VEKEVVEATDSREKTG). Positions 636–656 (LKCVEAEIANYEACLKEEVEK) form a coiled coil. The tract at residues 642-686 (EIANYEACLKEEVEKRKKFKIDDQRRTHNYDEFICTFISMLAQEG) is interaction with YY1. Residues 670–698 (NYDEFICTFISMLAQEGMLANLVEQNISV) form the ULD domain. An interaction with nucleosomal DNA forming a DNA clamp with ASXL1 region spans residues 699–701 (RRR). Residues 699–722 (RRRQGVSIGRLHKQRKPDRRKRSR) carry the Classical bipartite Nuclear localization signal (NLS) motif. The segment at 703–729 (GVSIGRLHKQRKPDRRKRSRPYKAKRQ) is disordered. A positively charged C-terminal extension (CTE) region spans residues 713–729 (RKPDRRKRSRPYKAKRQ). The Non-classical PY-nuclear localization signal (PY-NLS) signature appears at 717–724 (RRKRSRPY).

The protein belongs to the peptidase C12 family. BAP1 subfamily. As to quaternary structure, core component of the polycomb repressive deubiquitinase (PR-DUB) complex, at least composed of BAP1, one of ASXL1, ASXL2 or (probably) ASXL3, and one of MBD5 or MBD6. The PR-DUB core associates with a number of accessory proteins, including FOXK1, FOXK2, KDM1B, HCFC1, YY1 and OGT; KDM1B specifically associates with ASXL2 PR-DUB complexes. The BAP1 deubiquitinase activity is not required for PR-DUB assembly. Homodimerizes (via coiled-coil hinge-region between the UCH and ULD domains) to mediate assembly of 2 copies of the BAP1-ASXL heterodimer into a bisymmetric tetramer; dimerization enhances association with nucleosomes. The PR-DUB complex associates with nucleosomes to mediate deubiquitination of 'lys-120' of histone H2AK118ub1 substrates; the association requires the positively charged C-terminal tail of BAP1. Interacts (via ULD domain) with ASXL1 (via DEUBAD domain); the interaction is direct and forms a ubiquitin binding cleft. The interaction with ASXL1 stabilizes BAP1 but is not required for nucleosome binding. Associates (via C-terminus) with nucleosome and chromatosome complexes through direct interaction with DNA and the histone3/4 dimer; this association displaces the histone-2A C-terminal tail, extending and orienting the H2AK118ub1 substrate towards the BAP1 deubiquitinase active site. Also interacts (via arginine finger) directly with the histone H2A-H2B acidic patch; this interaction is not critical for nucleosome-chromatosome association but may play a role in orienting the H2AK118ub1 substrate towards the PR-DUB complex active site. Interacts with BRCA1 (via the RING finger). Interacts (via HBM-like motif) with HCFC1. Interacts (via a C-terminal region overlapping the ULD domain) with YY1; the interaction is direct and requires the interaction with HCFC1. Interacts (when phosphorylated at Thr-493) with FOXK1. Interacts (when phosphorylated at Thr-493) with FOXK2; leading to recruitment of the PR-DUB complex and repression of FOXK2 target genes. Interacts (via non-classical PY-NLS) with TNPO1/transportin-1 (via HEAT repeats 8-12); the interaction is direct, mediates BAP1 nuclear localization and disrupts BAP1 homodimerization. Interacts (via C-terminus) with KPNA1/importin alpha5 and KPNA2/importin alpha1; these interactions can contribute to BAP1 nuclear localization but are less important than the interaction with TNPO1/transportin-1. The interaction with TNPO1/transportin-1 disrupts homodimerization and blocks ubiquitination by UBE2O. Post-translationally, ubiquitinated: monoubiquitinated at multiple sites within its nuclear localization signal (NLS) BY UBE2O, leading to cytoplasmic retention. Able to mediate autodeubiquitination via intramolecular interactions to counteract cytoplasmic retention. Monoubiquitinated on at least 4 sites near or within its PY-NLS. As to expression, highly expressed in testis, placenta and ovary. Expressed in breast. levels in the placenta increase over the course of pregnancy.

The protein localises to the cytoplasm. The protein resides in the nucleus. It is found in the chromosome. It catalyses the reaction Thiol-dependent hydrolysis of ester, thioester, amide, peptide and isopeptide bonds formed by the C-terminal Gly of ubiquitin (a 76-residue protein attached to proteins as an intracellular targeting signal).. Functionally, deubiquitinating enzyme that plays a key role in chromatin by mediating deubiquitination of histone H2A and HCFC1. Catalytic component of the polycomb repressive deubiquitinase (PR-DUB) complex, a complex that specifically mediates deubiquitination of histone H2A monoubiquitinated at 'Lys-120' (H2AK119ub1). Does not deubiquitinate monoubiquitinated histone H2B. The PR-DUB complex is an epigenetic regulator of gene expression and acts as a transcriptional coactivator, affecting genes involved in development, cell communication, signaling, cell proliferation and cell viability. Antagonizes PRC1 mediated H2AK119ub1 monoubiquitination. As part of the PR-DUB complex, associates with chromatin enriched in histone marks H3K4me1, H3K4me3, and H3K27Ac, but not in H3K27me3. Recruited to specific gene-regulatory regions by YY1. Acts as a regulator of cell growth by mediating deubiquitination of HCFC1 N-terminal and C-terminal chains, with some specificity toward 'Lys-48'-linked polyubiquitin chains compared to 'Lys-63'-linked polyubiquitin chains. Deubiquitination of HCFC1 does not lead to increase stability of HCFC1. Interferes with the BRCA1 and BARD1 heterodimer activity by inhibiting their ability to mediate ubiquitination and autoubiquitination. It however does not mediate deubiquitination of BRCA1 and BARD1. Able to mediate autodeubiquitination via intramolecular interactions to counteract monoubiquitination at the nuclear localization signal (NLS), thereby protecting it from cytoplasmic sequestration. Negatively regulates epithelial-mesenchymal transition (EMT) of trophoblast stem cells during placental development by regulating genes involved in epithelial cell integrity, cell adhesion and cytoskeletal organization. The sequence is that of Ubiquitin carboxyl-terminal hydrolase BAP1 from Homo sapiens (Human).